The chain runs to 471 residues: L-amino acid dehydrogenase (471 aa).

Residue Gly31 coordinates Mg(2+). Ser33 contacts FAD. Residue Gly34 coordinates Mg(2+). FAD-binding residues include Glu52, Arg60, and Val256. Residue Ala283 participates in Mg(2+) binding. Phe453 provides a ligand contact to FAD.

This sequence belongs to the flavin monoamine oxidase family. FAD serves as cofactor. The cofactor is Mg(2+).

The protein localises to the cellular thylakoid membrane. The enzyme catalyses a plastoquinone + an L-alpha-amino acid + H2O = a plastoquinol + a 2-oxocarboxylate + NH4(+). The catalysed reaction is a plastoquinone + L-arginine + H2O = a plastoquinol + 5-guanidino-2-oxopentanoate + NH4(+). It functions in the pathway amino-acid degradation; L-arginine degradation. Inhibited by Ca(2+) and other cations such as Ni(2+), Co(2+) and Zn(2+). The inhibition by o-phenanthroline and salicylhydroxamic acid suggests the presence of a metal cofactor besides FAD in the enzyme. The L-arginine-stimulated O(2) consumption involving slr0782 is inhibited by inhibitors of the respiratory electron transport chain, such as KCN and 2,5-dibromo-3-methyl-6-isopropyl-p-benzoquinone, which indicates a participation of the cytochrome b6/f complex and of a cytochrome oxidase. Functionally, L-amino acid dehydrogenase with broad substrate specificity. Catalyzes the oxidative deamination of various L-amino acids, L-Arg and L-Cys being the best substrates in vitro. Likely functions mainly as an L-arginine dehydrogenase in vivo. Probably feeds electrons from L-arginine oxidation and also from the oxidation of other L-amino acids into the respiratory electron transport chain associated to the thylakoid membrane, and does not directly interact with molecular oxygen but donates electrons to the plastoquinone pool. Cannot use D-amino acids as substrates. The protein is L-amino acid dehydrogenase of Synechocystis sp. (strain ATCC 27184 / PCC 6803 / Kazusa).